We begin with the raw amino-acid sequence, 236 residues long: Phosphoribosylaminoimidazole-succinocarboxamide synthase (236 aa).

The protein belongs to the SAICAR synthetase family.

It catalyses the reaction 5-amino-1-(5-phospho-D-ribosyl)imidazole-4-carboxylate + L-aspartate + ATP = (2S)-2-[5-amino-1-(5-phospho-beta-D-ribosyl)imidazole-4-carboxamido]succinate + ADP + phosphate + 2 H(+). It functions in the pathway purine metabolism; IMP biosynthesis via de novo pathway; 5-amino-1-(5-phospho-D-ribosyl)imidazole-4-carboxamide from 5-amino-1-(5-phospho-D-ribosyl)imidazole-4-carboxylate: step 1/2. In Pseudomonas putida (strain W619), this protein is Phosphoribosylaminoimidazole-succinocarboxamide synthase.